Here is a 244-residue protein sequence, read N- to C-terminus: THO complex subunit 4A (244 aa).

The segment at 1–82 (MSTGLDMSLD…EDHRSGRSSA (82 aa)) is disordered. N-acetylserine is present on serine 2. Residues 21 to 35 (GGAGPARGTGSGSGP) are compositionally biased toward gly residues. Over residues 67 to 77 (MFSDRSEDHRS) the composition is skewed to basic and acidic residues. The 78-residue stretch at 88 to 165 (TKLYISNLDY…KPMKIEIVGT (78 aa)) folds into the RRM domain. The segment at 169–244 (TAAAPSGRPA…KYHSGDMETN (76 aa)) is disordered. Over residues 187 to 211 (WRGGQGRGGQQRGGGRGGGGRGGGG) the composition is skewed to gly residues. Residues 220–244 (PAEKISAEDLDADLDKYHSGDMETN) are compositionally biased toward basic and acidic residues.

Belongs to the ALYREF family.

The protein localises to the nucleus. The protein resides in the nucleoplasm. Its subcellular location is the nucleolus. Its function is as follows. Export adapter involved in nuclear export of spliced and unspliced mRNA. This is THO complex subunit 4A (ALY1) from Arabidopsis thaliana (Mouse-ear cress).